Reading from the N-terminus, the 274-residue chain is Large ribosomal subunit protein uL2 (274 aa).

Disordered stretches follow at residues glutamine 37 to histidine 60 and alanine 224 to leucine 252. A compositionally biased stretch (basic residues) spans threonine 50 to histidine 60. Positions aspartate 229–valine 246 are enriched in basic and acidic residues.

Belongs to the universal ribosomal protein uL2 family. In terms of assembly, part of the 50S ribosomal subunit. Forms a bridge to the 30S subunit in the 70S ribosome.

In terms of biological role, one of the primary rRNA binding proteins. Required for association of the 30S and 50S subunits to form the 70S ribosome, for tRNA binding and peptide bond formation. It has been suggested to have peptidyltransferase activity; this is somewhat controversial. Makes several contacts with the 16S rRNA in the 70S ribosome. This is Large ribosomal subunit protein uL2 from Paracidovorax citrulli (strain AAC00-1) (Acidovorax citrulli).